A 182-amino-acid chain; its full sequence is Adenine phosphoribosyltransferase (182 aa).

The protein belongs to the purine/pyrimidine phosphoribosyltransferase family. As to quaternary structure, homodimer.

The protein localises to the cytoplasm. It catalyses the reaction AMP + diphosphate = 5-phospho-alpha-D-ribose 1-diphosphate + adenine. Its pathway is purine metabolism; AMP biosynthesis via salvage pathway; AMP from adenine: step 1/1. Functionally, catalyzes a salvage reaction resulting in the formation of AMP, that is energically less costly than de novo synthesis. The polypeptide is Adenine phosphoribosyltransferase (Campylobacter concisus (strain 13826)).